The sequence spans 138 residues: U1 small nuclear ribonucleoprotein C (138 aa).

The Matrin-type zinc finger occupies 4 to 36 (FYCDYCDTYLTHDSPSVRKTHCSGRKHKENVRD). Y8 is subject to Phosphotyrosine. Residue S17 is modified to Phosphoserine. K52 bears the N6-acetyllysine mark. Residues 62-99 (IPPNLFSAPPLGGPMIPPPHPSMMGPPPPGMMPVGPPP) are disordered. Over residues 72 to 99 (LGGPMIPPPHPSMMGPPPPGMMPVGPPP) the composition is skewed to pro residues.

Belongs to the U1 small nuclear ribonucleoprotein C family. In terms of assembly, component of the U1 snRNP. The U1 snRNP is composed of the U1 snRNA and the 7 core Sm proteins SNRPB, SNRPD1, SNRPD2, SNRPD3, SNRPE, SNRPF and SNRPG that assemble in a heptameric protein ring on the Sm site of the small nuclear RNA to form the core snRNP, and at least 3 U1 snRNP-specific proteins SNRNP70/U1-70K, SNRPA/U1-A and SNRPC/U1-C. SNRPC/U1-C interacts with U1 snRNA and the 5' splice-site region of the pre-mRNA. Interacts (via N-terminus) with TIA1 (via C-terminus); thereby promoting spliceosomal U1 snRNP recruitment to 5' splice sites.

The protein localises to the nucleus. Functionally, component of the spliceosomal U1 snRNP, which is essential for recognition of the pre-mRNA 5' splice-site and the subsequent assembly of the spliceosome. SNRPC/U1-C is directly involved in initial 5' splice-site recognition for both constitutive and regulated alternative splicing. The interaction with the 5' splice-site seems to precede base-pairing between the pre-mRNA and the U1 snRNA. Stimulates commitment or early (E) complex formation by stabilizing the base pairing of the 5' end of the U1 snRNA and the 5' splice-site region. The chain is U1 small nuclear ribonucleoprotein C from Monodelphis domestica (Gray short-tailed opossum).